Reading from the N-terminus, the 107-residue chain is Integration host factor subunit beta (107 aa).

The span at 82 to 101 shows a compositional bias: basic and acidic residues; the sequence is PGKELRERVDRRAGEPLKAE. The segment at 82–107 is disordered; sequence PGKELRERVDRRAGEPLKAEDPDDDL.

Belongs to the bacterial histone-like protein family. Heterodimer of an alpha and a beta chain.

This protein is one of the two subunits of integration host factor, a specific DNA-binding protein that functions in genetic recombination as well as in transcriptional and translational control. The chain is Integration host factor subunit beta from Paraburkholderia xenovorans (strain LB400).